Reading from the N-terminus, the 306-residue chain is tRNA dimethylallyltransferase (306 aa).

11 to 18 (APTAAGKT) contributes to the ATP binding site. 13–18 (TAAGKT) lines the substrate pocket.

Belongs to the IPP transferase family. As to quaternary structure, monomer. Requires Mg(2+) as cofactor.

The catalysed reaction is adenosine(37) in tRNA + dimethylallyl diphosphate = N(6)-dimethylallyladenosine(37) in tRNA + diphosphate. In terms of biological role, catalyzes the transfer of a dimethylallyl group onto the adenine at position 37 in tRNAs that read codons beginning with uridine, leading to the formation of N6-(dimethylallyl)adenosine (i(6)A). This is tRNA dimethylallyltransferase from Deinococcus radiodurans (strain ATCC 13939 / DSM 20539 / JCM 16871 / CCUG 27074 / LMG 4051 / NBRC 15346 / NCIMB 9279 / VKM B-1422 / R1).